The primary structure comprises 400 residues: Putative F-box protein At5g41510 (400 aa).

The F-box domain occupies 2–47 (ATMISNLPRDLIEEIFSRVPLTSMKAVRLTCKSWNNLSKSESFTKV).

This chain is Putative F-box protein At5g41510, found in Arabidopsis thaliana (Mouse-ear cress).